The chain runs to 272 residues: Transcription factor E2F6 (272 aa).

Residues M1–P62 form a binding to corepressors region. The DNA-binding element occupies Y50–S129. Positions K95–S129 match the DEF box motif. The dimerization stretch occupies residues D130–V222. The interval L143 to C164 is leucine-zipper. The interval D173–Q272 is transcription repression. The disordered stretch occupies residues H242–Q272.

The protein belongs to the E2F/DP family. In terms of assembly, forms heterodimers with DP family members TFDP1 or TFDP2. Component of the DRTF1/E2F transcription factor complex. Part of the E2F6.com-1 complex in G0 phase composed of E2F6, MGA, MAX, TFDP1, CBX3, BAT8, EUHMTASE1, RING1, RNF2, MBLR, L3MBTL2 and YAF2. Component of some MLL1/MLL complex, at least composed of the core components KMT2A/MLL1, ASH2L, HCFC1/HCF1, WDR5 and RBBP5, as well as the facultative components BACC1, CHD8, E2F6, HSP70, INO80C, KANSL1, LAS1L, MAX, MCRS1, MGA, KAT8/MOF, PELP1, PHF20, PRP31, RING2, RUVB1/TIP49A, RUVB2/TIP49B, SENP3, TAF1, TAF4, TAF6, TAF7, TAF9 and TEX10.

It is found in the nucleus. Functionally, inhibitor of E2F-dependent transcription. Binds DNA cooperatively with DP proteins through the E2 recognition site, 5'-TTTC[CG]CGC-3'. Has a preference for the 5'-TTTCCCGC-3' E2F recognition site. E2F6 lacks the transcriptional activation and pocket protein binding domains. Appears to regulate a subset of E2F-dependent genes whose products are required for entry into the cell cycle but not for normal cell cycle progression. Represses expression of some meiosis-specific genes, including SLC25A31/ANT4. May silence expression via the recruitment of a chromatin remodeling complex containing histone H3-K9 methyltransferase activity. Overexpression delays the exit of cells from the S-phase. In Mus musculus (Mouse), this protein is Transcription factor E2F6.